Consider the following 173-residue polypeptide: Ribosome maturation factor RimM (173 aa).

Positions E97–L171 constitute a PRC barrel domain.

Belongs to the RimM family. In terms of assembly, binds ribosomal protein uS19.

The protein localises to the cytoplasm. Functionally, an accessory protein needed during the final step in the assembly of 30S ribosomal subunit, possibly for assembly of the head region. Essential for efficient processing of 16S rRNA. May be needed both before and after RbfA during the maturation of 16S rRNA. It has affinity for free ribosomal 30S subunits but not for 70S ribosomes. This Halalkalibacterium halodurans (strain ATCC BAA-125 / DSM 18197 / FERM 7344 / JCM 9153 / C-125) (Bacillus halodurans) protein is Ribosome maturation factor RimM.